A 302-amino-acid polypeptide reads, in one-letter code: Protein NEOXANTHIN-DEFICIENT 1 (302 aa).

In terms of biological role, required for neoxanthin biosynthesis. Probably not involved directly in the enzymatic conversion of violaxanthin to neoxanthin. Is necessary but not sufficient for neoxanthin synthesis. In Oryza sativa subsp. japonica (Rice), this protein is Protein NEOXANTHIN-DEFICIENT 1.